The sequence spans 336 residues: Lipoyl synthase (336 aa).

The [4Fe-4S] cluster site is built by Cys81, Cys86, Cys92, Cys107, Cys111, Cys114, and Ser323. The Radical SAM core domain occupies 93-312 (FGHGTATFMI…EDYGYELGFS (220 aa)).

The protein belongs to the radical SAM superfamily. Lipoyl synthase family. [4Fe-4S] cluster serves as cofactor.

Its subcellular location is the cytoplasm. It carries out the reaction [[Fe-S] cluster scaffold protein carrying a second [4Fe-4S](2+) cluster] + N(6)-octanoyl-L-lysyl-[protein] + 2 oxidized [2Fe-2S]-[ferredoxin] + 2 S-adenosyl-L-methionine + 4 H(+) = [[Fe-S] cluster scaffold protein] + N(6)-[(R)-dihydrolipoyl]-L-lysyl-[protein] + 4 Fe(3+) + 2 hydrogen sulfide + 2 5'-deoxyadenosine + 2 L-methionine + 2 reduced [2Fe-2S]-[ferredoxin]. Its pathway is protein modification; protein lipoylation via endogenous pathway; protein N(6)-(lipoyl)lysine from octanoyl-[acyl-carrier-protein]: step 2/2. Functionally, catalyzes the radical-mediated insertion of two sulfur atoms into the C-6 and C-8 positions of the octanoyl moiety bound to the lipoyl domains of lipoate-dependent enzymes, thereby converting the octanoylated domains into lipoylated derivatives. This Stenotrophomonas maltophilia (strain R551-3) protein is Lipoyl synthase.